A 427-amino-acid chain; its full sequence is Putative tyrosine recombinase XerC (427 aa).

Residues 1–81 (MTPQQLTEEY…HLRTIWGYAI (81 aa)) enclose the Core-binding (CB) domain. Residues 116-305 (RARSWLSMQV…DYDHMRAVLH (190 aa)) enclose the Tyr recombinase domain. Catalysis depends on residues R156, K183, H256, R259, and H283. Y292 serves as the catalytic O-(3'-phospho-DNA)-tyrosine intermediate. 2 disordered regions span residues 323–384 (SGSP…PPDT) and 401–427 (RAATASAVPAATSGSGGRGSAARDSLA). Positions 350–362 (ARTEPSEPREHTQ) are enriched in basic and acidic residues. Over residues 402–413 (AATASAVPAATS) the composition is skewed to low complexity.

It belongs to the 'phage' integrase family.

Its subcellular location is the cytoplasm. Its function is as follows. Site-specific tyrosine recombinase, which acts by catalyzing the cutting and rejoining of the recombining DNA molecules. This Pseudomonas aeruginosa protein is Putative tyrosine recombinase XerC.